Consider the following 201-residue polypeptide: Beta-lactamase inhibitory protein (201 aa).

An N-terminal signal peptide occupies residues 1–36 (MRTVGIGAGVRRLGRAVVMAAAVGGLVLGSAGASNA). A run of 2 repeats spans residues 37 to 112 (AGVM…EKLL) and 116 to 201 (APTL…WDLV). Intrachain disulfides connect Cys66/Cys78 and Cys145/Cys167.

In terms of assembly, interacts with E.coli beta-lactamase TEM-1; interaction inhibits hydrolysis of beta-lactam antibiotics. Interacts with K.pneumoniae beta-lactamase SHV-1. Interacts with K.pneumoniae beta-lactamases KPC-2 and KPC-3; interaction inhibits hydrolysis of beta-lactam antibiotics. Interacts with E.coli beta-lactamases CTX-M-14 and CTX-M-15; interaction inhibits hydrolysis of beta-lactam antibiotics.

It is found in the secreted. Inhibits a wide variety of beta lactamases. The polypeptide is Beta-lactamase inhibitory protein (Streptomyces clavuligerus).